A 117-amino-acid chain; its full sequence is Large ribosomal subunit protein bL19 (117 aa).

It belongs to the bacterial ribosomal protein bL19 family.

This protein is located at the 30S-50S ribosomal subunit interface and may play a role in the structure and function of the aminoacyl-tRNA binding site. The sequence is that of Large ribosomal subunit protein bL19 from Phocaeicola vulgatus (strain ATCC 8482 / DSM 1447 / JCM 5826 / CCUG 4940 / NBRC 14291 / NCTC 11154) (Bacteroides vulgatus).